Consider the following 248-residue polypeptide: Large ribosomal subunit protein uL4 (248 aa).

Disordered regions lie at residues 48–96 (GTHK…PVPR) and 210–248 (AFSE…RTGA). Residues 233-248 (DATKARSSRHDDRTGA) show a composition bias toward basic and acidic residues.

This sequence belongs to the universal ribosomal protein uL4 family. As to quaternary structure, part of the 50S ribosomal subunit.

Its function is as follows. One of the primary rRNA binding proteins, this protein initially binds near the 5'-end of the 23S rRNA. It is important during the early stages of 50S assembly. It makes multiple contacts with different domains of the 23S rRNA in the assembled 50S subunit and ribosome. Forms part of the polypeptide exit tunnel. This chain is Large ribosomal subunit protein uL4, found in Tropheryma whipplei (strain Twist) (Whipple's bacillus).